A 227-amino-acid chain; its full sequence is Biosynthetic peptidoglycan transglycosylase (227 aa).

Residues 7–27 form a helical membrane-spanning segment; sequence VALLTLLLLVAAPYVLTLVYG.

Belongs to the glycosyltransferase 51 family.

It is found in the cell inner membrane. It catalyses the reaction [GlcNAc-(1-&gt;4)-Mur2Ac(oyl-L-Ala-gamma-D-Glu-L-Lys-D-Ala-D-Ala)](n)-di-trans,octa-cis-undecaprenyl diphosphate + beta-D-GlcNAc-(1-&gt;4)-Mur2Ac(oyl-L-Ala-gamma-D-Glu-L-Lys-D-Ala-D-Ala)-di-trans,octa-cis-undecaprenyl diphosphate = [GlcNAc-(1-&gt;4)-Mur2Ac(oyl-L-Ala-gamma-D-Glu-L-Lys-D-Ala-D-Ala)](n+1)-di-trans,octa-cis-undecaprenyl diphosphate + di-trans,octa-cis-undecaprenyl diphosphate + H(+). Its pathway is cell wall biogenesis; peptidoglycan biosynthesis. Its function is as follows. Peptidoglycan polymerase that catalyzes glycan chain elongation from lipid-linked precursors. This chain is Biosynthetic peptidoglycan transglycosylase, found in Rhodopseudomonas palustris (strain HaA2).